The chain runs to 176 residues: Tubulin polymerization-promoting protein family member 3 (176 aa).

Ala2 is subject to N-acetylalanine. The disordered stretch occupies residues 132–152 (TGSHKERFDESGKGKGIAGRQ). Residues 134–144 (SHKERFDESGK) are compositionally biased toward basic and acidic residues.

The protein belongs to the TPPP family.

It is found in the cytoplasm. The protein resides in the cytoskeleton. Regulator of microtubule dynamic that has microtubule bundling activity. Required for embryo implantation; possibly by regulating beta-catenin. Also required for decidualization via regulation of beta-catenin. The sequence is that of Tubulin polymerization-promoting protein family member 3 from Mus musculus (Mouse).